Reading from the N-terminus, the 325-residue chain is D-alanine--D-alanine ligase (325 aa).

One can recognise an ATP-grasp domain in the interval 109 to 309 (KRVCKERMLP…FCTLLDQLIE (201 aa)). 136–191 (CRRLPFPMFVKPANLGSSVGISKAHDEQELEAAFSLAKQYDRKIIVERGIEGRELE) is an ATP binding site. Mg(2+)-binding residues include Asp262, Glu276, and Asn278.

Belongs to the D-alanine--D-alanine ligase family. Requires Mg(2+) as cofactor. The cofactor is Mn(2+).

It is found in the cytoplasm. The catalysed reaction is 2 D-alanine + ATP = D-alanyl-D-alanine + ADP + phosphate + H(+). The protein operates within cell wall biogenesis; peptidoglycan biosynthesis. Cell wall formation. The sequence is that of D-alanine--D-alanine ligase from Solibacter usitatus (strain Ellin6076).